The sequence spans 487 residues: UL37 immediate early glycoprotein (487 aa).

The first 22 residues, 1 to 22, serve as a signal peptide directing secretion; sequence MSPVYVNLLGSVGLLAFWYFSY. Residues 83 to 107 show a composition bias toward acidic residues; sequence GEESVTEDTEREDTEEEREDEEEEN. The tract at residues 83–121 is disordered; that stretch reads GEESVTEDTEREDTEEEREDEEEENEARTPEVNPIDAEG. Residues N206, N210, N219, N223, N242, N246, N275, N281, N294, N297, N306, N333, N337, N343, N379, N384, and N391 are each glycosylated (N-linked (GlcNAc...) asparagine; by host). The helical transmembrane segment at 433–459 threads the bilayer; the sequence is WALLSICTVAAGSIALLSLFCILLIGL.

The protein belongs to the immediate early glycoprotein family. Interacts with host BAX. Interacts with host RSAD2/viperin; this interaction results in RSAD2/viperin relocalization from the endoplasmic reticulum to the mitochondria, actin cytoskeleton disruption and enhancement of infection. Interacts with host PEX19; this interaction inhibits the peroxisomal-dependent antiviral signaling. Interacts with host CHCHD6; this interaction rewires mitochondria by engaging the conserved MICOS complex.

The protein resides in the host endoplasmic reticulum membrane. It localises to the host Golgi apparatus membrane. It is found in the host mitochondrion membrane. Its subcellular location is the host peroxisome. Multifunctional transmembrane protein that plays several key roles in viral replication. Rapidely traffics from the host endoplasmic reticulum to the outer mitochondrial membrane where it acts to inhibit host immune response, block apoptotic signaling, regulate calcium flux, and induce mitochondrial fragmentation. Sequesters proapoptotic BAX at the outer mitochondrial membrane and prevents cytochrome c release and subsequent initiation of the proapoptotic cascade. Also provoques a calcium efflux from host endoplasmic reticulum and F-actin cytoskeleton disruption. Participates in the increase of host mitochondrial biogenesis, thus promoting viral replication by efficient use of newly made mitochondria. Additionally, a subset of vMIA localizes to peroxisomes, causing fragmentation and blocking peroxisomal MAVS signaling. Mechanistically, inhibits host MAVS oligomerization at peroxisomes in a mitochondrial fission factors (MFF)-dependent manner and in mitochondria independently of mitochondrial fission factors. Plays an essential role in the trafficking of host viperin/RSAD2 from the endoplasmic reticulum to the viral assembly compartment via the mitochondria during viral infection as failure of viperin to localize to the mitochondria results in insufficient lipogenesis and thus reduces viral replication. In terms of biological role, may play a role in escape from the host antiviral response. This chain is UL37 immediate early glycoprotein (UL37), found in Human cytomegalovirus (strain AD169) (HHV-5).